The sequence spans 349 residues: Protein Wnt-7a (349 aa).

An N-terminal signal peptide occupies residues 1–31 (MNRKARRCLGHLFLSLGMVYLRIGGFSSVVA). Cystine bridges form between cysteine 73–cysteine 84, cysteine 123–cysteine 131, cysteine 133–cysteine 152, cysteine 200–cysteine 214, and cysteine 202–cysteine 209. N-linked (GlcNAc...) asparagine glycans are attached at residues asparagine 83 and asparagine 127. The O-palmitoleoyl serine; by PORCN moiety is linked to residue serine 206. The disordered linker stretch occupies residues 238-266 (VEPVRASRNKRPTFLKIKKPLSYRKPMDT). 6 disulfide bridges follow: cysteine 278-cysteine 309, cysteine 294-cysteine 304, cysteine 308-cysteine 348, cysteine 324-cysteine 339, cysteine 326-cysteine 336, and cysteine 331-cysteine 332. A glycan (N-linked (GlcNAc...) asparagine) is linked at asparagine 295.

The protein belongs to the Wnt family. As to quaternary structure, forms a soluble 1:1 complex with AFM; this prevents oligomerization and is required for prolonged biological activity. The complex with AFM may represent the physiological form in body fluids. Interacts with PORCN. Interacts (via intrinsically disordered linker region) with RECK; interaction with RECK confers ligand selectivity for Wnt7 in brain endothelial cells and allows these cells to selectively respond to Wnt7. Interacts with FZD5. In terms of processing, palmitoleoylation is required for efficient binding to frizzled receptors. Depalmitoleoylation leads to Wnt signaling pathway inhibition.

It localises to the secreted. The protein localises to the extracellular space. Its subcellular location is the extracellular matrix. Its function is as follows. Ligand for members of the frizzled family of seven transmembrane receptors that functions in the canonical Wnt/beta-catenin signaling pathway. Plays an important role in embryonic development, including dorsal versus ventral patterning during limb development, skeleton development and urogenital tract development. Required for central nervous system (CNS) angiogenesis and blood-brain barrier regulation. Required for normal, sexually dimorphic development of the Mullerian ducts, and for normal fertility in both sexes. Required for normal neural stem cell proliferation in the hippocampus dentate gyrus. Required for normal progress through the cell cycle in neural progenitor cells, for self-renewal of neural stem cells, and for normal neuronal differentiation and maturation. Promotes formation of synapses via its interaction with FZD5. This is Protein Wnt-7a (WNT7A) from Pongo pygmaeus (Bornean orangutan).